The following is a 222-amino-acid chain: Capsular polysaccharide type 5 biosynthesis protein cap5A (222 aa).

2 helical membrane passes run 20–40 and 172–192; these read ILIILPLLFLIISAIVTFFVL and VVNLIGAFFLGLVVALIYIFF.

This sequence belongs to the CpsC/CapA family.

Its subcellular location is the cell membrane. Its function is as follows. Required for the biosynthesis of type 5 capsular polysaccharide (Cap5/CP5). Might act as the chain-length regulator. The sequence is that of Capsular polysaccharide type 5 biosynthesis protein cap5A (cap5A) from Staphylococcus aureus (strain Newman).